The primary structure comprises 122 residues: Large ribosomal subunit protein uL14 (122 aa).

It belongs to the universal ribosomal protein uL14 family. As to quaternary structure, part of the 50S ribosomal subunit. Forms a cluster with proteins L3 and L19. In the 70S ribosome, L14 and L19 interact and together make contacts with the 16S rRNA in bridges B5 and B8.

Binds to 23S rRNA. Forms part of two intersubunit bridges in the 70S ribosome. This Pelodictyon phaeoclathratiforme (strain DSM 5477 / BU-1) protein is Large ribosomal subunit protein uL14.